A 1392-amino-acid polypeptide reads, in one-letter code: DNA-directed RNA polymerase subunit beta'' (1392 aa).

Residues Cys224, Cys295, Cys302, and Cys305 each contribute to the Zn(2+) site.

Belongs to the RNA polymerase beta' chain family. RpoC2 subfamily. In terms of assembly, in plastids the minimal PEP RNA polymerase catalytic core is composed of four subunits: alpha, beta, beta', and beta''. When a (nuclear-encoded) sigma factor is associated with the core the holoenzyme is formed, which can initiate transcription. The cofactor is Zn(2+).

The protein resides in the plastid. It is found in the chloroplast. It catalyses the reaction RNA(n) + a ribonucleoside 5'-triphosphate = RNA(n+1) + diphosphate. Its function is as follows. DNA-dependent RNA polymerase catalyzes the transcription of DNA into RNA using the four ribonucleoside triphosphates as substrates. The polypeptide is DNA-directed RNA polymerase subunit beta'' (Nicotiana tomentosiformis (Tobacco)).